The following is a 541-amino-acid chain: Arginine--tRNA ligase (541 aa).

Residues 119 to 129 (ANPTGPLHIGH) carry the 'HIGH' region motif.

The protein belongs to the class-I aminoacyl-tRNA synthetase family. As to quaternary structure, monomer.

The protein localises to the cytoplasm. The enzyme catalyses tRNA(Arg) + L-arginine + ATP = L-arginyl-tRNA(Arg) + AMP + diphosphate. The chain is Arginine--tRNA ligase from Helicobacter acinonychis (strain Sheeba).